We begin with the raw amino-acid sequence, 670 residues long: Zinc finger protein 233 (670 aa).

A KRAB domain is found at 8-79 (VTFKDVAVVF…ETEIQGDGCS (72 aa)). A C2H2-type 1; degenerate zinc finger spans residues 258–280 (QTSDENGKGLSVGSNLELHQQLH). The C2H2-type 2; degenerate zinc finger occupies 311 to 336 (EKCYRNGDSGEGFSQGSHLQPHQRVS). The segment at 342–364 (YRCQVYARSSNQNSCLPSHELTH) adopts a C2H2-type 3; degenerate zinc-finger fold. Residues 370-392 (CTCGRCGKGFHHSLDFDIHCVDS) form a C2H2-type 4; degenerate zinc finger. A C2H2-type 5; degenerate zinc finger spans residues 398 to 420 (CKCDVYDKGFSQTSQLQAHQRGH). 7 C2H2-type zinc fingers span residues 452–474 (YKCE…QRIH), 480–502 (YKCD…QRVH), 508–530 (YKCD…QRVH), 536–558 (YKCE…QQVH), 564–586 (YKCD…QRVH), 592–614 (YKCE…QRIH), and 620–642 (YKCG…QRVH).

The protein belongs to the krueppel C2H2-type zinc-finger protein family.

Its subcellular location is the nucleus. May be involved in transcriptional regulation. The sequence is that of Zinc finger protein 233 (ZNF233) from Homo sapiens (Human).